The sequence spans 198 residues: Dephospho-CoA kinase (198 aa).

In terms of domain architecture, DPCK spans 3 to 198; the sequence is IVGITGGIGS…LLAKERLELA (196 aa). 11–16 lines the ATP pocket; sequence GSGKTT.

Belongs to the CoaE family.

The protein localises to the cytoplasm. It catalyses the reaction 3'-dephospho-CoA + ATP = ADP + CoA + H(+). It participates in cofactor biosynthesis; coenzyme A biosynthesis; CoA from (R)-pantothenate: step 5/5. In terms of biological role, catalyzes the phosphorylation of the 3'-hydroxyl group of dephosphocoenzyme A to form coenzyme A. The chain is Dephospho-CoA kinase from Dehalococcoides mccartyi (strain ATCC BAA-2266 / KCTC 15142 / 195) (Dehalococcoides ethenogenes (strain 195)).